Consider the following 84-residue polypeptide: MKFLFLFLAILLATEVPVISGKRHILRCMGNSGICRASCKKNEQPYLYCRNYQACCLQSYMRISISGKEENTDWSYEKQWPRLP.

An N-terminal signal peptide occupies residues 1 to 21; it reads MKFLFLFLAILLATEVPVISG. Intrachain disulfides connect cysteine 28/cysteine 55, cysteine 35/cysteine 49, and cysteine 39/cysteine 56.

It belongs to the beta-defensin family. As to expression, abundant expression in the male reproductive tract only. Expressed abundantly in testis, while expression in epididymis decreased gradually from caput to cauda.

It is found in the secreted. Functionally, has antibacterial activity. The chain is Beta-defensin 119 (DEFB119) from Macaca mulatta (Rhesus macaque).